The primary structure comprises 921 residues: Protein translocase subunit SecA (921 aa).

ATP-binding positions include glutamine 87, 105 to 109 (GEGKT), and aspartate 501. Positions 831-886 (PFPVINTETSGPSEEPAGLFSQGTTGGDIPAPQPMAGFPSAAPMPPRPQPVPTGAE) are disordered. Pro residues predominate over residues 872-881 (APMPPRPQPV). Zn(2+) is bound by residues cysteine 905, cysteine 907, cysteine 916, and histidine 917.

Belongs to the SecA family. As to quaternary structure, monomer and homodimer. Part of the essential Sec protein translocation apparatus which comprises SecA, SecYEG and auxiliary proteins SecDF-YajC and YidC. Requires Zn(2+) as cofactor.

The protein resides in the cell inner membrane. It is found in the cytoplasm. It catalyses the reaction ATP + H2O + cellular proteinSide 1 = ADP + phosphate + cellular proteinSide 2.. In terms of biological role, part of the Sec protein translocase complex. Interacts with the SecYEG preprotein conducting channel. Has a central role in coupling the hydrolysis of ATP to the transfer of proteins into and across the cell membrane, serving both as a receptor for the preprotein-SecB complex and as an ATP-driven molecular motor driving the stepwise translocation of polypeptide chains across the membrane. The protein is Protein translocase subunit SecA of Gluconobacter oxydans (strain 621H) (Gluconobacter suboxydans).